We begin with the raw amino-acid sequence, 124 residues long: Large ribosomal subunit protein uL18 (124 aa).

This sequence belongs to the universal ribosomal protein uL18 family. As to quaternary structure, part of the 50S ribosomal subunit; part of the 5S rRNA/L5/L18/L25 subcomplex. Contacts the 5S and 23S rRNAs.

Its function is as follows. This is one of the proteins that bind and probably mediate the attachment of the 5S RNA into the large ribosomal subunit, where it forms part of the central protuberance. The sequence is that of Large ribosomal subunit protein uL18 from Parafrankia sp. (strain EAN1pec).